The sequence spans 94 residues: Pyrimidine/purine nucleoside phosphorylase 2 (94 aa).

Belongs to the nucleoside phosphorylase PpnP family.

It catalyses the reaction a purine D-ribonucleoside + phosphate = a purine nucleobase + alpha-D-ribose 1-phosphate. The enzyme catalyses adenosine + phosphate = alpha-D-ribose 1-phosphate + adenine. It carries out the reaction cytidine + phosphate = cytosine + alpha-D-ribose 1-phosphate. The catalysed reaction is guanosine + phosphate = alpha-D-ribose 1-phosphate + guanine. It catalyses the reaction inosine + phosphate = alpha-D-ribose 1-phosphate + hypoxanthine. The enzyme catalyses thymidine + phosphate = 2-deoxy-alpha-D-ribose 1-phosphate + thymine. It carries out the reaction uridine + phosphate = alpha-D-ribose 1-phosphate + uracil. The catalysed reaction is xanthosine + phosphate = alpha-D-ribose 1-phosphate + xanthine. Its function is as follows. Catalyzes the phosphorolysis of diverse nucleosides, yielding D-ribose 1-phosphate and the respective free bases. Can use uridine, adenosine, guanosine, cytidine, thymidine, inosine and xanthosine as substrates. Also catalyzes the reverse reactions. The sequence is that of Pyrimidine/purine nucleoside phosphorylase 2 from Psychrobacter cryohalolentis (strain ATCC BAA-1226 / DSM 17306 / VKM B-2378 / K5).